Consider the following 76-residue polypeptide: Kappa-actitoxin-Avd4d (76 aa).

A signal peptide spans 1 to 19; sequence MNKALFLCLVVLCAAVVFA. The propeptide occupies 20–31; it reads AEDLQKAKHVPF. 3 cysteine pairs are disulfide-bonded: cysteine 37-cysteine 72, cysteine 39-cysteine 65, and cysteine 55-cysteine 73.

The protein belongs to the sea anemone type 3 (BDS) potassium channel toxin family. As to expression, moderately expressed in the ectodermal tissue from the distal and proximal tentacles, body wall, and oral disk.

The protein resides in the secreted. It localises to the nematocyst. Blocks Kv3 voltage-gated potassium channels. Reduces blood pressure. The sequence is that of Kappa-actitoxin-Avd4d from Anemonia viridis (Snakelocks anemone).